Reading from the N-terminus, the 124-residue chain is Large ribosomal subunit protein uL14 (124 aa).

This sequence belongs to the universal ribosomal protein uL14 family. As to quaternary structure, part of the 50S ribosomal subunit. Forms a cluster with proteins L3 and L19. In the 70S ribosome, L14 and L19 interact and together make contacts with the 16S rRNA in bridges B5 and B8.

In terms of biological role, binds to 23S rRNA. Forms part of two intersubunit bridges in the 70S ribosome. The chain is Large ribosomal subunit protein uL14 from Clostridium novyi (strain NT).